Consider the following 508-residue polypeptide: Glycerol kinase (508 aa).

Thr14 contacts ADP. Positions 14, 15, and 16 each coordinate ATP. Thr14 contributes to the sn-glycerol 3-phosphate binding site. Arg18 provides a ligand contact to ADP. Positions 84, 85, 134, and 247 each coordinate sn-glycerol 3-phosphate. Arg84, Glu85, Tyr134, Asp247, and Gln248 together coordinate glycerol. ADP is bound by residues Thr269 and Gly313. ATP contacts are provided by Thr269, Gly313, Gln317, and Gly416. An ADP-binding site is contributed by Gly416.

It belongs to the FGGY kinase family.

The enzyme catalyses glycerol + ATP = sn-glycerol 3-phosphate + ADP + H(+). It participates in polyol metabolism; glycerol degradation via glycerol kinase pathway; sn-glycerol 3-phosphate from glycerol: step 1/1. With respect to regulation, inhibited by fructose 1,6-bisphosphate (FBP). In terms of biological role, key enzyme in the regulation of glycerol uptake and metabolism. Catalyzes the phosphorylation of glycerol to yield sn-glycerol 3-phosphate. The sequence is that of Glycerol kinase from Mycoplasmoides gallisepticum (strain R(low / passage 15 / clone 2)) (Mycoplasma gallisepticum).